A 217-amino-acid chain; its full sequence is MAEISASMVKELRERTGAGMMDCKKALAEVGGDMEKAIEFLREKGLAAAAKKAGRIAAEGVVESYIHGGGRIGVLVEINCETDFVAKNEDFRGLAKDIAMQIAAAKPEFVRREEVSADKIEKEKEILRAQALNEGKPEKIVEKMVEGRIEKFYKEVCLLEQPFIKDSDKTVQQVINEIIAKIGEKVDVRRFVRYEMGEGLEKRQDDFAAEVAAQIKA.

Residues 82–85 are involved in Mg(2+) ion dislocation from EF-Tu; that stretch reads TDFV.

It belongs to the EF-Ts family.

It localises to the cytoplasm. Functionally, associates with the EF-Tu.GDP complex and induces the exchange of GDP to GTP. It remains bound to the aminoacyl-tRNA.EF-Tu.GTP complex up to the GTP hydrolysis stage on the ribosome. This Desulforamulus reducens (strain ATCC BAA-1160 / DSM 100696 / MI-1) (Desulfotomaculum reducens) protein is Elongation factor Ts.